Reading from the N-terminus, the 4060-residue chain is MFYNQVTLAVASDSEISGFGFAIPSVAVRTYSEAAAQGFQACRFVAFGLQDCVTGINDDDYVIALTGTNQLCAKILPFSDRPLNLRGWLIFSNSNYVLQDFDVVFGHGAGSVVFVDKYMCGFDGKPVLPKNMWEFRDYFNNNTDSIVIGGVTYQLAWDVIRKDLSYEQQNVLAIESIHYLGTTGHTLKSGCKLTNAKPPKYSSKVVLSGEWNAVYRAFGSPFITNGMSLLDIIVKPVFFNAFVKCNCGSESWSVGAWDGYLSSCCGTPAKKLCVVPGNVVPGDVIITSTSAGCGVKYYAGLVVKHITNITGVSLWRVTAVHSDGMFVASSSYDALLHRNSLDPFCFDVNTLLSNQLRLAFLGASVTEDVKFAASTGVIDISAGMFGLYDDILTNNKPWFVRKASGLFDAIWDAFVAAIKLVPTTTGVLVRFVKSIASTVLTVSNGVIIMCADVPDAFQSVYRTFTQAICAAFDFSLDVFKIGDVKFKRLGDYVLTENALVRLTTEVVRGVRDARIKKAMFTKVVVGPTTEVKFSVIELATVNLRLVDCAPVVCPKGKIVVIAGQAFFYSGGFYRFMVDPTTVLNDPVFTGDLFYTIKFSGFKLDGFNHQFVTASSATDAIIAVELLLLDFKTAVFVYTCVVDGCSVIVRRDATFATHVCFKDCYNVWEQFCIDNCGEPWFLTDYNAILQSNNPQCAIVQASESKVLLERFLPKCPEILLSIDDGHLWNLFVEKFNFVTDWLKTLKLTLTSNGLLGNCAKRFRRVLVKLLDVYNGFLETVCSVAYTAGVCIKYYAVNVPYVVISGFVSRVIRRERCDMTFPCVSCVTFFYEFLDTCFGVSKPNAIDVEHLELKETVFVEPKDGGQFFVSGDYLWYVVDDIYYPASCNGVLPVAFTKLAGGKISFSDDVIVHDVEPTHKVKLIFEFEDDVVTSLCKKSFGKSIIYTGDWEGLHEVLTSAMNVIGQHIKLPQFYIYDEEGGYDVSKPVMISQWPISNDSNGCVVEASTDFHQLECIVDDSVREEVDIIEQPFEEVEHVLSIKQPFSFSFRDELGVRVLDQSDNNCWISTTLVQLQLTKLLDDSIEMQLFKVGKVDSIVQKCYELSHLISGSLGDSGKLLSELLKEKYTCSITFEMSCDCGKKFDDQVGCLFWIMPYTKLFQKGECCICHKMQTYKLVSMKGTGVFVQDPAPIDIDAFPVKPICSSVYLGVKGSGHYQTNLYSFNKAIDGFGVFDIKNSSVNTVCFVDVDFHSVEIEAGEVKPFAVYKNVKFYLGDISHLVNCVSFDFVVNAANENLLHGGGVARAIDILTEGQLQSLSKDYISSNGPLKVGAGVMLECEKFNVFNVVGPRTGKHEHSLLVEAYNSILFENGIPLMPLLSCGIFGVRIENSLKALFSCDINKPLQVFVYSSNEEQAVLKFLDGLDLTPVIDDVDVVKPFRVEGNFSFFDCGVNALDGDIYLLFTNSILMLDKQGQLLDTKLNGILQQAALDYLATVKTVPAGNLVKLFVESCTIYMCVVPSINDLSFDKNLGRCVRKLNRLKTCVIANVPAIDVLKKLLSSLTLTVKFVVESNVMDVNDCFKNDNVVLKITEDGINVKDVVVESSKSLGKQLGVVSDGVDSFEGVLPINTDTVLSVAPEVDWVAFYGFEKAALFASLDVKPYGYPNDFVGGFRVLGTTDNNCWVNATCIILQYLKPTFKSKGLNVLWNKFVTGDVGPFVSFIYFITMSSKGQKGDAEEALSKLSEYLISDSIVTLEQYSTCDICKSTVVEVKSAIVCASVLKDGCDVGFCPHRHKLRSRVKFVNGRVVITNVGEPIISQPSKLLNGIAYTTFSGSFDNGHYVVYDAANNAVYDGARLFSSDLSTLAVTAIVVVGGCVTSNVPTIVSEKISVMDKLDTGAQKFFQFGDFVMNNIVLFLTWLLSMFSLLRTSIMKHDIKVIAKAPKRTGVILTRSFKYNIRSALFVIKQKWCVIVTLFKFLLLLYAIYALVFMIVQFSPFNSLLCGDIVSGYEKSTFNKDIYCGNSMVCKMCLFSYQEFNDLDHTSLVWKHIRDPILISLQPFVILVILLIFGNMYLRFGLLYFVAQFISTFGSFLGFHQKQWFLHFVPFDVLCNEFLATFIVCKIVLFVRHIIVGCNNADCVACSKSARLKRVPLQTIINGMHKSFYVNANGGTCFCNKHNFFCVNCDSFGPGNTFINGDIARELGNVVKTAVQPTAPAYVIIDKVDFVNGFYRLYSGDTFWRYDFDITESKYSCKEVLKNCNVLENFIVYNNSGSNITQIKNACVYFSQLLCEPIKLVNSELLSTLSVDFNGVLHKAYVDVLCNSFFKELTANMSMAECKATLGLTVSDDDFVSAVANAHRYDVLLSDLSFNNFFISYAKPEDKLSVYDIACCMRAGSKVVNHNVLIKESIPIVWGVKDFNTLSQEGKKYLVKTTKAKGLTFLLTFNDNQAITQVPATSIVAKQGAGFKRTYNFLWYVCLFVVALFIGVSFIDYTTTVTSFHGYDFKYIENGQLKVFEAPLHCVRNVFDNFNQWHEAKFGVVTTNSDKCPIVVGVSERINVVPGVPTNVYLVGKTLVFTLQAAFGNTGVCYDFDGVTTSDKCIFNSACTRLEGLGGDNVYCYNTDLIEGSKPYSTLQPNAYYKYDAKNYVRFPEILARGFGLRTIRTLATRYCRVGECRDSHKGVCFGFDKWYVNDGRVDDGYICGDGLIDLLVNVLSIFSSSFSVVAMSGHMLFNFLFAAFITFLCFLVTKFKRVFGDLSYGVFTVVCATLINNISYVVTQNLFFMLLYAILYFVFTRTVRYAWIWHIAYIVAYFLLIPWWLLTWFSFAAFLELLPNVFKLKISTQLFEGDKFIGTFESAAAGTFVLDMRSYERLINTISPEKLKNYAASYNKYKYYSGSASEADYRCACYAHLAKAMLDYAKDHNDMLYSPPTISYNSTLQSGLKKMAQPSGCVERCVVRVCYGSTVLNGVWLGDTVTCPRHVIAPSTTVLIDYDHAYSTMRLHNFSVSHNGVFLGVVGVTMHGSVLRIKVSQSNVHTPKHVFKTLKPGDSFNILACYEGIASGVFGVNLRTNFTIKGSFINGACGSPGYNVRNDGTVEFCYLHQIELGSGAHVGSDFTGSVYGNFDDQPSLQVESANLMLSDNVVAFLYAALLNGCRWWLCSTRVNVDGFNEWAMANGYTSVSSVECYSILAAKTGVSVEQLLASIQHLHEGFGGKNILGYSSLCDEFTLAEVVKQMYGVNLQSGKVIFGLKTMFLFSVFFTMFWAELFIYTNTIWINPVILTPIFCLLLFLSLVLTMFLKHKFLFLQVFLLPTVIATALYNCVLDYYIVKFLADHFNYNVSVLQMDVQGLVNVLVCLFVVFLHTWRFSKERFTHWFTYVCSLIAVAYTYFYSGDFLSLLVMFLCAISSDWYIGAIVFRLSRLIVFFSPESVFSVFGDVKLTLVVYLICGYLVCTYWGILYWFNRFFKCTMGVYDFKVSAAEFKYMVANGLHAPHGPFDALWLSFKLLGIGGDRCIKISTVQSKLTDLKCTNVVLLGCLSSMNIAANSSEWAYCVDLHNKINLCDDPEKAQSMLLALLAFFLSKHSDFGLDGLIDSYFDNSSTLQSVASSFVSMPSYIAYENARQAYEDAIANGSSSQLIKQLKRAMNIAKSEFDHEISVQKKINRMAEQAATQMYKEARSVNRKSKVISAMHSLLFGMLRRLDMSSVETVLNLARDGVVPLSVIPATSASKLTIVSPDLESYSKIVCDGSVHYAGVVWTLNDVKDNDGRPVHVKEITKENVETLTWPLILNCERVVKLQNNEIMPGKLKQKPMKAEGDGGVLGDGNALYNTEGGKTFMYAYISNKADLKFVKWEYEGGCNTIELDSPCRFMVETPNGPQVKYLYFVKNLNTLRRGAVLGFIGATIRLQAGKQTELAVNSGLLTACAFSVDPATTYLEAVKHGAKPVSNCIKMLSNGAGNGQAITTSVDANTNQDSYGGASICLYCRAHVPHPSMDGYCKFKGKCVQVPIGCLDPIRFCLENNVCNVCGCWLGHGCACDRTTIQSVDISYLNEQGVLVQLD.

Residues Phe2–Ala109 form the CoV Nsp1 globular domain. The region spanning Val112–Leu358 is the CoV Nsp2 N-terminal domain. Cys245, Cys247, Cys264, and Cys265 together coordinate Zn(2+). The tract at residues Cys245–Cys265 is C4. Residues Tyr388–Thr778 enclose the CoV Nsp2 middle domain. One can recognise a CoV Nsp2 C-terminal domain in the interval Leu776–Gly898. Residues Gly899–Asn994 enclose the Ubiquitin-like 1 domain. Positions Glu1021–Val1262 constitute a Peptidase C16 1 domain. Cys1062 (for PL1-PRO activity) is an active-site residue. 4 residues coordinate Zn(2+): Cys1134, Cys1136, Cys1163, and Cys1165. The C4-type 1 zinc finger occupies Cys1134–Cys1165. Active-site for PL1-PRO activity residues include His1212 and Asp1225. In terms of domain architecture, Macro spans Tyr1263–Asp1421. Residues Asn1579–Ala1633 enclose the Ubiquitin-like 2 domain. The 247-residue stretch at Ala1640–Ser1886 folds into the Peptidase C16 2 domain. Cys1678 acts as the For PL2-PRO activity in catalysis. Zn(2+)-binding residues include Cys1757, Cys1760, Cys1786, and His1788. Residues Cys1757–His1788 form a C4-type 2; atypical zinc finger. Catalysis depends on for PL2-PRO activity residues His1836 and Asp1841. The next 2 membrane-spanning stretches (helical) occupy residues Asp1903–Leu1923 and Ile1968–Ile1988. Positions Asp1903–Cys2131 are HD1. The 66-residue stretch at Ala1983–Asp2048 folds into the 3Ecto domain. 2 cysteine pairs are disulfide-bonded: Cys1999–Cys2026 and Cys2017–Cys2023. 3 consecutive transmembrane segments (helical) span residues Ile2050 to Tyr2070, Phe2073 to His2093, and Phe2111 to Cys2131. A Y1 region spans residues Leu2122–Ala2212. The CoV Nsp3 Y domain occupies Leu2122 to Gly2461. His2126, Cys2131, Cys2136, Cys2139, Cys2172, His2175, Cys2179, and Cys2182 together coordinate Zn(2+). Residues His2126 to Cys2139 are ZF1. The segment at Cys2172–Cys2182 is ZF2. The tract at residues Pro2213–Leu2302 is Y2. The coV-Y stretch occupies residues Pro2213–Gly2461. The tract at residues Ser2303–Asp2359 is Y3. The tract at residues Val2360 to Gly2461 is Y4. The next 5 helical transmembrane spans lie at Tyr2468–Ile2488, Gly2727–Thr2747, Val2752–Ile2769, Ile2772–Val2792, and Ala2800–Leu2820. Residues Tyr2468 to Leu2820 form an HD2 region. One can recognise a Nsp4C domain in the interval Leu2844 to Gln2939. Residues Ser2940 to Gln3242 form the Peptidase C30 domain. Active-site for 3CL-PRO activity residues include His2980 and Cys3083. 7 helical membrane passes run Phe3254–Ile3274, Val3279–Leu3299, Phe3303–Val3323, Val3342–Leu3362, Phe3376–Leu3396, Ser3397–Phe3417, and Leu3442–Phe3462. Residues Phe3254–Phe3462 form an HD3 region. A RdRp Nsp7 cofactor domain is found at Ser3522–Gln3604. The RdRp Nsp8 cofactor domain maps to Ser3605–Gln3799. One can recognise a Nsp9 ssRNA-binding domain in the interval Asn3800–Gln3908. An ExoN/MTase coactivator domain is found at Ala3909 to Ile4047. Positions 3982, 3985, 3991, 3998, 4024, 4027, 4035, and 4037 each coordinate Zn(2+). Zinc fingers lie at residues Cys3982–Cys3998 and Cys4024–Cys4037.

Belongs to the coronaviruses polyprotein 1ab family. As to quaternary structure, 3CL-PRO exists as monomer and homodimer. Eight copies of nsp7 and eight copies of nsp8 assemble to form a heterohexadecamer. Nsp9 is a dimer. Nsp10 forms a dodecamer. In terms of processing, specific enzymatic cleavages in vivo by its own proteases yield mature proteins. 3CL-PRO and PL-PRO proteinases are autocatalytically processed.

It localises to the host membrane. It is found in the host cytoplasm. The protein resides in the host perinuclear region. The catalysed reaction is Thiol-dependent hydrolysis of ester, thioester, amide, peptide and isopeptide bonds formed by the C-terminal Gly of ubiquitin (a 76-residue protein attached to proteins as an intracellular targeting signal).. The papain-like proteinase 1 (PLP1) and papain-like proteinase 2 (PLP2) are responsible for the cleavages located at the N-terminus of the replicase polyprotein. In addition, PLP2 possesses a deubiquitinating/deISGylating activity and processes both 'Lys-48'- and 'Lys-63'-linked polyubiquitin chains from cellular substrates. PLP2 also antagonizes innate immune induction of type I interferon by blocking the nuclear translocation of host IRF-3. Functionally, responsible for the majority of cleavages as it cleaves the C-terminus of replicase polyprotein at 11 sites. Recognizes substrates containing the core sequence [ILMVF]-Q-|-[SGACN]. Inhibited by the substrate-analog Cbz-Val-Asn-Ser-Thr-Leu-Gln-CMK. Also contains an ADP-ribose-1''-phosphate (ADRP)-binding function. Its function is as follows. Nsp7-nsp8 hexadecamer may possibly confer processivity to the polymerase, maybe by binding to dsRNA or by producing primers utilized by the latter. In terms of biological role, nsp9 is a ssRNA-binding protein. This chain is Replicase polyprotein 1a, found in Homo sapiens (Human).